The following is an 840-amino-acid chain: DNA helicase MCM8 (840 aa).

The disordered stretch occupies residues 16–54; sequence QSWKRGRGGGNFSGKWREREHRPDLSKTTGKRTSEQTPQ. Residues 30-40 are compositionally biased toward basic and acidic residues; that stretch reads KWREREHRPDL. One can recognise an MCM domain in the interval 402–609; the sequence is LFKLIVNSLC…HHDHLLSEHV (208 aa). An ATP-binding site is contributed by 454–461; that stretch reads GDPGLGKS. Phosphoserine is present on serine 630.

This sequence belongs to the MCM family. Component of the MCM8-MCM9 complex, which forms a hexamer composed of MCM8 and MCM9. Interacts with the DNA mismatch repair (MMR) complex composed at least of MSH2, MSH3, MSH6, PMS1 and MLH1. Interacts with RAD51; the interaction recruits RAD51 to DNA damage sites. Interacts with the MRN complex composed of MRE11, RAD50 and NBN/NBS1. Interacts with CDC6 and ORC2. Interacts with HROB; the interaction recruits the MCM8-MCM9 complex to DNA damage sites. In terms of tissue distribution, highest levels in placenta, lung and pancreas. Low levels in skeletal muscle and kidney. Expressed in various tumors with highest levels in colon and lung cancers.

The protein resides in the nucleus. It localises to the chromosome. The catalysed reaction is ATP + H2O = ADP + phosphate + H(+). Functionally, component of the MCM8-MCM9 complex, a complex involved in the repair of double-stranded DNA breaks (DBSs) and DNA interstrand cross-links (ICLs) by homologous recombination (HR). Required for DNA resection by the MRE11-RAD50-NBN/NBS1 (MRN) complex by recruiting the MRN complex to the repair site and by promoting the complex nuclease activity. Probably by regulating the localization of the MNR complex, indirectly regulates the recruitment of downstream effector RAD51 to DNA damage sites including DBSs and ICLs. The MCM8-MCM9 complex is dispensable for DNA replication and S phase progression. However, may play a non-essential for DNA replication: may be involved in the activation of the prereplicative complex (pre-RC) during G(1) phase by recruiting CDC6 to the origin recognition complex (ORC). Probably by regulating HR, plays a key role during gametogenesis. Stabilizes MCM9 protein. The protein is DNA helicase MCM8 (MCM8) of Homo sapiens (Human).